We begin with the raw amino-acid sequence, 272 residues long: Ribonuclease HII (272 aa).

The 186-residue stretch at 87 to 272 (KYVAGVDEVG…HRMSFLKNIL (186 aa)) folds into the RNase H type-2 domain. A divalent metal cation is bound by residues Asp93, Glu94, and Asp188.

It belongs to the RNase HII family. Mn(2+) is required as a cofactor. Requires Mg(2+) as cofactor.

It localises to the cytoplasm. The enzyme catalyses Endonucleolytic cleavage to 5'-phosphomonoester.. Its function is as follows. Endonuclease that specifically degrades the RNA of RNA-DNA hybrids. This chain is Ribonuclease HII, found in Clostridium perfringens (strain 13 / Type A).